The chain runs to 397 residues: Lysophospholipid transporter LplT (397 aa).

11 helical membrane-spanning segments follow: residues 21–41, 53–73, 91–111, 139–159, 164–184, 229–249, 257–277, 281–301, 304–324, 344–364, and 372–392; these read SAQFLSAFGDNALLFATLALL, ILQMVFVGAYILFAPFVGQVA, LGAASICFGFNPFIGYTLVGI, LMESSTIAAILLGSVAGGVLA, LAALGICAVVYAGAVVANLFI, WGAGVTLRFLLVLWVPTALGI, YLNAMVAVGIVVGAGAAAKLV, TVRRCMPAGILIGVGVLFFSL, ALLPAYGLLILIGILGGFFIV, IAVQNLGENTAMLLMLGLYSL, and VVGIGVGFGALFALAITGLWI.

It belongs to the major facilitator superfamily. LplT (TC 2.A.1.42) family.

It localises to the cell inner membrane. Catalyzes the facilitated diffusion of 2-acyl-glycero-3-phosphoethanolamine (2-acyl-GPE) into the cell. This chain is Lysophospholipid transporter LplT, found in Enterobacter sp. (strain 638).